An 88-amino-acid chain; its full sequence is Large ribosomal subunit protein bL31B (88 aa).

It belongs to the bacterial ribosomal protein bL31 family. Type B subfamily. As to quaternary structure, part of the 50S ribosomal subunit.

The protein is Large ribosomal subunit protein bL31B of Paraburkholderia xenovorans (strain LB400).